Consider the following 142-residue polypeptide: Large ribosomal subunit protein uL13 (142 aa).

The protein belongs to the universal ribosomal protein uL13 family. As to quaternary structure, part of the 50S ribosomal subunit.

This protein is one of the early assembly proteins of the 50S ribosomal subunit, although it is not seen to bind rRNA by itself. It is important during the early stages of 50S assembly. This is Large ribosomal subunit protein uL13 from Acidovorax sp. (strain JS42).